The following is a 98-amino-acid chain: NADH-ubiquinone oxidoreductase chain 4L (98 aa).

The next 3 membrane-spanning stretches (helical) occupy residues 1–21 (MTLI…GLLM), 29–49 (ALLC…LTIL), and 61–81 (IILL…LVMV).

It belongs to the complex I subunit 4L family. In terms of assembly, core subunit of respiratory chain NADH dehydrogenase (Complex I) which is composed of 45 different subunits.

Its subcellular location is the mitochondrion inner membrane. The enzyme catalyses a ubiquinone + NADH + 5 H(+)(in) = a ubiquinol + NAD(+) + 4 H(+)(out). Functionally, core subunit of the mitochondrial membrane respiratory chain NADH dehydrogenase (Complex I) which catalyzes electron transfer from NADH through the respiratory chain, using ubiquinone as an electron acceptor. Part of the enzyme membrane arm which is embedded in the lipid bilayer and involved in proton translocation. The polypeptide is NADH-ubiquinone oxidoreductase chain 4L (MT-ND4L) (Megaptera novaeangliae (Humpback whale)).